Consider the following 28-residue polypeptide: Dermaseptin-2.2TR (28 aa).

As to expression, expressed by the skin glands.

It is found in the secreted. Has antimicrobial activity. This chain is Dermaseptin-2.2TR, found in Phyllomedusa trinitatis (Trinidad leaf frog).